Consider the following 1508-residue polypeptide: uncharacterized protein (1508 aa).

Positions 149–267 form a coiled coil; sequence ARRQQWRLRR…ARSLQEHRAT (119 aa). Disordered regions lie at residues 248–268, 345–403, 536–575, 725–754, and 868–916; these read ERSE…RATE, SQDW…LAGS, FLKK…GKNL, GLEE…SQEH, and EAKS…AEPW. Positions 868-881 are enriched in basic and acidic residues; sequence EAKSKESGEGDKPG. A coiled-coil region spans residues 972-1034; the sequence is ISRLERDNHR…KGNLGQLQKA (63 aa). Disordered regions lie at residues 1158–1186 and 1204–1246; these read LAAG…LVWR and KEAH…EEDP. Positions 1163 to 1172 are enriched in polar residues; sequence TGPSTGTGNS. Residues 1204 to 1215 are compositionally biased toward basic and acidic residues; sequence KEAHLEKEEKRP. Over residues 1220–1230 the composition is skewed to polar residues; the sequence is AQGQALSSLSN. A coiled-coil region spans residues 1271–1302; that stretch reads HQASLDEATRLQEELQAKLEELQKKQHEAKLA.

This is an uncharacterized protein from Homo sapiens (Human).